We begin with the raw amino-acid sequence, 146 residues long: Large ribosomal subunit protein bL21 (146 aa).

The segment at 117–146 (ITIGKSAPKSSSKKETVKKETKPKSEKSTN) is disordered. Residues 128 to 146 (SKKETVKKETKPKSEKSTN) are compositionally biased toward basic and acidic residues.

This sequence belongs to the bacterial ribosomal protein bL21 family. Part of the 50S ribosomal subunit. Contacts protein L20.

Functionally, this protein binds to 23S rRNA in the presence of protein L20. The sequence is that of Large ribosomal subunit protein bL21 from Prochlorococcus marinus (strain MIT 9301).